The following is a 240-amino-acid chain: Protein FANTASTIC FOUR 2 (240 aa).

Disordered stretches follow at residues 89–124 and 177–229; these read TTPR…PPIK and LLSH…KPML. Residues 117–171 enclose the FAF domain; that stretch reads NSFPPPIKFVEDSKYNRMVRWLGEDGRIVVQAIRVSSPPSCFVSERGEGRLRLIL. Acidic residues predominate over residues 184-200; it reads EEEEEETEEGIDEETSE. The span at 207–216 shows a compositional bias: basic residues; sequence GNKKFSRFSR. Residues 217–226 are compositionally biased toward basic and acidic residues; that stretch reads RCKENGREPK.

It belongs to the fantastic four family. In terms of tissue distribution, expressed in the shoot apex, stamens, carpels and young siliques. Detected in provascular and vascular tissue, and in the center of the vegetative and inflorescence meristems. Expressed in the funiculus. In roots and leaves, predominantly expressed in phloem.

Regulates the size of the shoot meristem by modulating the CLV3-WUS feedback loop. Can repress WUS but is under negative control by CLV3. This is Protein FANTASTIC FOUR 2 (FAF2) from Arabidopsis thaliana (Mouse-ear cress).